The primary structure comprises 548 residues: C-type lectin domain family 4 member F (548 aa).

At 1 to 42 (MKEAELNRDMARYCTDNQCVSLQPQGLGPKSAALMAPRTLRH) the chain is on the cytoplasmic side. Residues 43-69 (VQVILALMVVTVIFSLLALFVVASQPW) traverse the membrane as a helical; Signal-anchor for type II membrane protein segment. Residues 70–548 (RPEWNKEPPS…STGWSAARVG (479 aa)) lie on the Extracellular side of the membrane. Asn86, Asn92, Asn115, Asn132, Asn209, and Asn255 each carry an N-linked (GlcNAc...) asparagine glycan. The C-type lectin domain maps to 438-538 (KFCTSQGAHL…GSSYPWVCKK (101 aa)). 2 disulfides stabilise this stretch: Cys440–Cys536 and Cys516–Cys528.

In terms of tissue distribution, kupffer cells.

The protein localises to the membrane. In terms of biological role, receptor with an affinity for galactose and fucose. Could be involved in endocytosis. The protein is C-type lectin domain family 4 member F (Clec4f) of Mus musculus (Mouse).